A 498-amino-acid chain; its full sequence is Isoflavone 2'-hydroxylase (498 aa).

Residues 3–23 traverse the membrane as a helical segment; it reads ILSYLCYSLFYLSIFFIIRLL. Cysteine 436 serves as a coordination point for heme.

It belongs to the cytochrome P450 family. Heme is required as a cofactor. As to expression, expressed constitutively in roots, but present at very low levels in uninfected stems and leaves.

It is found in the endoplasmic reticulum membrane. It carries out the reaction formononetin + reduced [NADPH--hemoprotein reductase] + O2 = 2'-hydroxyformononetin + oxidized [NADPH--hemoprotein reductase] + H2O + H(+). Functionally, involved in the biosynthesis of the pterocarpin phytoalexins. Acts on isoflavones with a 4'-methoxy group on the B-ring, such as formononetin and biochanin A, and on pseudobaptigenin. Has a low activity with daidzein and genistein and no activity with the 7-O-methylated isoflavonoids isoformononetin and prunetin. In Medicago truncatula (Barrel medic), this protein is Isoflavone 2'-hydroxylase.